Here is a 540-residue protein sequence, read N- to C-terminus: Bifunctional pantoate ligase/cytidylate kinase (540 aa).

Residues 1 to 280 form a pantoate--beta-alanine ligase region; that stretch reads MQWLRTVAAL…VGQTRLIDNL (280 aa). 28–35 contacts ATP; the sequence is MGSLHEGH. Catalysis depends on histidine 35, which acts as the Proton donor. (R)-pantoate is bound at residue glutamine 59. Residue glutamine 59 coordinates beta-alanine. 150 to 153 is a binding site for ATP; it reads GQKD. Glutamine 156 serves as a coordination point for (R)-pantoate. Residues valine 179 and 187 to 190 contribute to the ATP site; that span reads YSSR. The tract at residues 281–540 is cytidylate kinase; that stretch reads LLSPEGVDPL…RSGAAHFDII (260 aa). The interval 288–307 is disordered; the sequence is DPLPQEQQSAVPPSPKRGRR.

In the N-terminal section; belongs to the pantothenate synthetase family. It in the C-terminal section; belongs to the cytidylate kinase family. Type 1 subfamily.

The protein resides in the cytoplasm. It carries out the reaction (R)-pantoate + beta-alanine + ATP = (R)-pantothenate + AMP + diphosphate + H(+). It catalyses the reaction CMP + ATP = CDP + ADP. The enzyme catalyses dCMP + ATP = dCDP + ADP. The protein operates within cofactor biosynthesis; (R)-pantothenate biosynthesis; (R)-pantothenate from (R)-pantoate and beta-alanine: step 1/1. Functionally, catalyzes the condensation of pantoate with beta-alanine in an ATP-dependent reaction via a pantoyl-adenylate intermediate. Its function is as follows. Catalyzes the transfer of a phosphate group from ATP to either CMP or dCMP to form CDP or dCDP and ADP, respectively. In Synechococcus sp. (strain JA-3-3Ab) (Cyanobacteria bacterium Yellowstone A-Prime), this protein is Bifunctional pantoate ligase/cytidylate kinase.